The following is a 156-amino-acid chain: Probable cyclic pyranopterin monophosphate synthase (156 aa).

Substrate is bound by residues Leu74 to His76 and Met110 to Glu111. Asp125 is an active-site residue.

Belongs to the MoaC family. As to quaternary structure, homohexamer; trimer of dimers.

The enzyme catalyses (8S)-3',8-cyclo-7,8-dihydroguanosine 5'-triphosphate = cyclic pyranopterin phosphate + diphosphate. Its pathway is cofactor biosynthesis; molybdopterin biosynthesis. In terms of biological role, catalyzes the conversion of (8S)-3',8-cyclo-7,8-dihydroguanosine 5'-triphosphate to cyclic pyranopterin monophosphate (cPMP). This is Probable cyclic pyranopterin monophosphate synthase from Thermococcus kodakarensis (strain ATCC BAA-918 / JCM 12380 / KOD1) (Pyrococcus kodakaraensis (strain KOD1)).